Reading from the N-terminus, the 87-residue chain is Large ribosomal subunit protein bL27 (87 aa).

The interval 1 to 20 (MARKRGGSGSKNGRDSNPKY) is disordered.

It belongs to the bacterial ribosomal protein bL27 family.

This is Large ribosomal subunit protein bL27 (rpmA) from Treponema pallidum (strain Nichols).